The sequence spans 382 residues: MLVVKADYKKYPIPVLEKMRIDEDEFYKKYEACVVVQTCNRIEAYFDTEVNSDIDCILNDFSGFDVLKGKTATFHFLRVSCGMESMILGENQILGQIKTSFQKARELKKTSRYLDGLFLKAIHVGQRARTETKINEGGVSIGSAAVELAEKNFGLTNRNVLLIGAGEMGTLVAKALLEKHIKAVIVSNRTYERAETLAEELKGIAVHFDKLKEAINFSDVIICATSSPHYILKKEDLNDVGNKIIIDIANPRDVDDAVREFENIKLYTIDDLRNISDKNIQKRVEEVPAVEKIINEEYEVLMKQIEKINIEEVLKDFNSYVEEIRVKELEKAIKLSKTKNPEEIMENFSKAFVKRITHDFVSYSINTSKEDLMNSAWWKNGK.

Residues 38–41 (TCNR), serine 85, 90–92 (ENQ), and glutamine 96 contribute to the substrate site. Cysteine 39 acts as the Nucleophile in catalysis. Residue 164–169 (GAGEMG) participates in NADP(+) binding.

The protein belongs to the glutamyl-tRNA reductase family. In terms of assembly, homodimer.

The catalysed reaction is (S)-4-amino-5-oxopentanoate + tRNA(Glu) + NADP(+) = L-glutamyl-tRNA(Glu) + NADPH + H(+). It participates in porphyrin-containing compound metabolism; protoporphyrin-IX biosynthesis; 5-aminolevulinate from L-glutamyl-tRNA(Glu): step 1/2. Catalyzes the NADPH-dependent reduction of glutamyl-tRNA(Glu) to glutamate 1-semialdehyde (GSA). In Methanococcus maripaludis (strain C6 / ATCC BAA-1332), this protein is Glutamyl-tRNA reductase.